We begin with the raw amino-acid sequence, 471 residues long: 3-isopropylmalate dehydratase large subunit (471 aa).

The [4Fe-4S] cluster site is built by C347, C407, and C410.

Belongs to the aconitase/IPM isomerase family. LeuC type 1 subfamily. As to quaternary structure, heterodimer of LeuC and LeuD. [4Fe-4S] cluster is required as a cofactor.

It catalyses the reaction (2R,3S)-3-isopropylmalate = (2S)-2-isopropylmalate. It participates in amino-acid biosynthesis; L-leucine biosynthesis; L-leucine from 3-methyl-2-oxobutanoate: step 2/4. Functionally, catalyzes the isomerization between 2-isopropylmalate and 3-isopropylmalate, via the formation of 2-isopropylmaleate. This is 3-isopropylmalate dehydratase large subunit from Prochlorococcus marinus (strain MIT 9211).